The primary structure comprises 366 residues: Agamous-like MADS-box protein AGL36 (366 aa).

In terms of domain architecture, MADS-box spans 1 to 59; it reads MKKVKLSLIANERSRKTSFIKRKDGIFKKLHELSTLCGVQACALIYSPFIPVPESWPSR. Residues 86-115 are a coiled coil; that stretch reads TYLMERITKAKEQLKNLAAENRELQVRRFM.

In terms of assembly, interacts with AGL62.

Its subcellular location is the nucleus. Its function is as follows. Probable transcription factor. This is Agamous-like MADS-box protein AGL36 (AGL36) from Arabidopsis thaliana (Mouse-ear cress).